The following is a 287-amino-acid chain: UPF0725 protein At1g19060 (287 aa).

It belongs to the UPF0725 (EMB2204) family.

The protein is UPF0725 protein At1g19060 of Arabidopsis thaliana (Mouse-ear cress).